A 287-amino-acid chain; its full sequence is Large ribosomal subunit protein uL2 (287 aa).

The tract at residues 221–287 is disordered; the sequence is RGSVMNPCDH…SKRSRGGRDS (67 aa). Over residues 258 to 287 the composition is skewed to basic residues; the sequence is KTRKRNKPSNRFVLRKRRRTSKRSRGGRDS.

This sequence belongs to the universal ribosomal protein uL2 family. As to quaternary structure, part of the 50S ribosomal subunit. Forms a bridge to the 30S subunit in the 70S ribosome.

Functionally, one of the primary rRNA binding proteins. Required for association of the 30S and 50S subunits to form the 70S ribosome, for tRNA binding and peptide bond formation. It has been suggested to have peptidyltransferase activity; this is somewhat controversial. Makes several contacts with the 16S rRNA in the 70S ribosome. The chain is Large ribosomal subunit protein uL2 from Prochlorococcus marinus (strain MIT 9313).